We begin with the raw amino-acid sequence, 183 residues long: Glutathione-regulated potassium-efflux system ancillary protein KefG (183 aa).

This sequence belongs to the NAD(P)H dehydrogenase (quinone) family. KefG subfamily. In terms of assembly, interacts with KefB.

It is found in the cell inner membrane. It catalyses the reaction a quinone + NADH + H(+) = a quinol + NAD(+). The catalysed reaction is a quinone + NADPH + H(+) = a quinol + NADP(+). Regulatory subunit of a potassium efflux system that confers protection against electrophiles. Required for full activity of KefB. The polypeptide is Glutathione-regulated potassium-efflux system ancillary protein KefG (Pectobacterium carotovorum subsp. carotovorum (strain PC1)).